A 145-amino-acid polypeptide reads, in one-letter code: Mite group 2 allergen Eur m 2 (145 aa).

An N-terminal signal peptide occupies residues Met-1–Ala-16. Intrachain disulfides connect Cys-24–Cys-135, Cys-37–Cys-43, and Cys-89–Cys-94.

Belongs to the NPC2 family.

Its subcellular location is the secreted. The protein is Mite group 2 allergen Eur m 2 (EURM2) of Euroglyphus maynei (Mayne's house dust mite).